Consider the following 252-residue polypeptide: Thiazole synthase (252 aa).

The Schiff-base intermediate with DXP role is filled by Lys-98. 1-deoxy-D-xylulose 5-phosphate is bound by residues Gly-159, 185 to 186 (AG), and 207 to 208 (AT).

Belongs to the ThiG family. As to quaternary structure, homotetramer. Forms heterodimers with either ThiH or ThiS.

Its subcellular location is the cytoplasm. It catalyses the reaction [ThiS sulfur-carrier protein]-C-terminal-Gly-aminoethanethioate + 2-iminoacetate + 1-deoxy-D-xylulose 5-phosphate = [ThiS sulfur-carrier protein]-C-terminal Gly-Gly + 2-[(2R,5Z)-2-carboxy-4-methylthiazol-5(2H)-ylidene]ethyl phosphate + 2 H2O + H(+). The protein operates within cofactor biosynthesis; thiamine diphosphate biosynthesis. In terms of biological role, catalyzes the rearrangement of 1-deoxy-D-xylulose 5-phosphate (DXP) to produce the thiazole phosphate moiety of thiamine. Sulfur is provided by the thiocarboxylate moiety of the carrier protein ThiS. In vitro, sulfur can be provided by H(2)S. The polypeptide is Thiazole synthase (Mycobacterium avium (strain 104)).